The primary structure comprises 175 residues: Co-chaperone protein HscB homolog (175 aa).

One can recognise a J domain in the interval S7–L79.

This sequence belongs to the HscB family. In terms of assembly, interacts with HscA and stimulates its ATPase activity.

Co-chaperone involved in the maturation of iron-sulfur cluster-containing proteins. Seems to help targeting proteins to be folded toward HscA. The protein is Co-chaperone protein HscB homolog of Burkholderia mallei (strain ATCC 23344).